Reading from the N-terminus, the 310-residue chain is Lymphotoxin-beta (310 aa).

Topologically, residues 1 to 27 are cytoplasmic; sequence MGALGLQGRGGRPQGTGCLLLAVAGAT. Residues 28-48 form a helical; Signal-anchor for type II membrane protein membrane-spanning segment; the sequence is SLVTLLLAVPITVLAVLALVP. Over 49 to 310 the chain is Extracellular; it reads QEQGGLVMES…LGKCLHSANV (262 aa). Positions 67–86 are disordered; that stretch reads QGLSKSNGLPSRLHSQIPSS. A THD domain is found at 138 to 293; that stretch reads PAAHLIGAWM…GKTFFGAVMV (156 aa). The N-linked (GlcNAc...) asparagine glycan is linked to asparagine 272.

This sequence belongs to the tumor necrosis factor family. In terms of assembly, heterotrimer of either two LTB and one LTA subunits or (less prevalent) two LTA and one LTB subunits.

Its subcellular location is the membrane. In terms of biological role, cytokine that binds to LTBR/TNFRSF3. May play a specific role in immune response regulation. Provides the membrane anchor for the attachment of the heterotrimeric complex to the cell surface. This chain is Lymphotoxin-beta (LTB), found in Marmota monax (Woodchuck).